A 667-amino-acid polypeptide reads, in one-letter code: tRNA 5-methylaminomethyl-2-thiouridine biosynthesis bifunctional protein MnmC (667 aa).

Residues 1-215 (MKFINGILFN…KREMIRAYFN (215 aa)) form a tRNA (mnm(5)s(2)U34)-methyltransferase region. The interval 240-667 (IGAGIAGIVT…LIRKLKKGLK (428 aa)) is FAD-dependent cmnm(5)s(2)U34 oxidoreductase.

It in the N-terminal section; belongs to the methyltransferase superfamily. tRNA (mnm(5)s(2)U34)-methyltransferase family. In the C-terminal section; belongs to the DAO family. FAD is required as a cofactor.

Its subcellular location is the cytoplasm. It carries out the reaction 5-aminomethyl-2-thiouridine(34) in tRNA + S-adenosyl-L-methionine = 5-methylaminomethyl-2-thiouridine(34) in tRNA + S-adenosyl-L-homocysteine + H(+). In terms of biological role, catalyzes the last two steps in the biosynthesis of 5-methylaminomethyl-2-thiouridine (mnm(5)s(2)U) at the wobble position (U34) in tRNA. Catalyzes the FAD-dependent demodification of cmnm(5)s(2)U34 to nm(5)s(2)U34, followed by the transfer of a methyl group from S-adenosyl-L-methionine to nm(5)s(2)U34, to form mnm(5)s(2)U34. In Campylobacter hominis (strain ATCC BAA-381 / DSM 21671 / CCUG 45161 / LMG 19568 / NCTC 13146 / CH001A), this protein is tRNA 5-methylaminomethyl-2-thiouridine biosynthesis bifunctional protein MnmC.